A 590-amino-acid polypeptide reads, in one-letter code: Leishmanolysin (590 aa).

The first 39 residues, 1 to 39 (MSVDSSSTHRHRSVAARLVRLAAAGAAVIAAVGTAAAWA), serve as a signal peptide directing secretion. Positions 40-87 (HAGAVQHRCIHDAMQARVRQSVARHHTAPGAVSAVGLSYVTLGAAPTV) are cleaved as a propeptide — activation peptide. Disulfide bonds link Cys112/Cys129 and Cys178/Cys217. A Zn(2+)-binding site is contributed by His251. Residue Glu252 is part of the active site. His255 serves as a coordination point for Zn(2+). Asn287 carries N-linked (GlcNAc...) asparagine glycosylation. Intrachain disulfides connect Cys301–Cys373, Cys380–Cys443, Cys393–Cys412, Cys402–Cys477, Cys454–Cys498, Cys503–Cys553, and Cys523–Cys546. Position 321 (His321) interacts with Zn(2+). Asn565 carries the GPI-anchor amidated asparagine lipid modification. The propeptide at 566 to 590 (AAAGRRGPRAAATALLVAALLAVAL) is removed in mature form.

It belongs to the peptidase M8 family. The cofactor is Zn(2+).

Its subcellular location is the cell membrane. It carries out the reaction Preference for hydrophobic residues at P1 and P1' and basic residues at P2' and P3'. A model nonapeptide is cleaved at -Ala-Tyr-|-Leu-Lys-Lys-.. In terms of biological role, has an integral role during the infection of macrophages in the mammalian host. This is Leishmanolysin (gp63) from Leishmania donovani.